A 152-amino-acid chain; its full sequence is Transcription elongation factor Spt5 (152 aa).

Residues 98–127 (EGDLVEVVSGPFRGMQAQVVKVTEGKGEVV) form the KOW domain.

The protein belongs to the archaeal Spt5 family. As to quaternary structure, heterodimer composed of Spt4 and Spt5. Interacts with RNA polymerase (RNAP).

In terms of biological role, stimulates transcription elongation. The polypeptide is Transcription elongation factor Spt5 (Acidianus ambivalens (Desulfurolobus ambivalens)).